The sequence spans 398 residues: Subtilisin-like protease CPC735_050320 (398 aa).

The N-terminal stretch at 1–19 (MVFLGKILPLALAALSVNG) is a signal peptide. Positions 20 to 117 (AEILSAPGAE…IERDQIMKAS (98 aa)) are excised as a propeptide. The 81-residue stretch at 35–115 (YIVVMKEGTS…AYIERDQIMK (81 aa)) folds into the Inhibitor I9 domain. The region spanning 127-398 (SWGLARVSSR…NRLINNGVSQ (272 aa)) is the Peptidase S8 domain. Catalysis depends on charge relay system residues aspartate 159 and histidine 190. N-linked (GlcNAc...) asparagine glycosylation is found at asparagine 220 and asparagine 250. Residue serine 344 is the Charge relay system of the active site.

This sequence belongs to the peptidase S8 family.

It localises to the secreted. In terms of biological role, secreted subtilisin-like serine protease with keratinolytic activity that contributes to pathogenicity. This Coccidioides posadasii (strain C735) (Valley fever fungus) protein is Subtilisin-like protease CPC735_050320.